We begin with the raw amino-acid sequence, 942 residues long: Alanine--tRNA ligase (942 aa).

Zn(2+) is bound by residues H586, H590, C695, and H699.

It belongs to the class-II aminoacyl-tRNA synthetase family. The cofactor is Zn(2+).

It is found in the cytoplasm. The catalysed reaction is tRNA(Ala) + L-alanine + ATP = L-alanyl-tRNA(Ala) + AMP + diphosphate. Catalyzes the attachment of alanine to tRNA(Ala) in a two-step reaction: alanine is first activated by ATP to form Ala-AMP and then transferred to the acceptor end of tRNA(Ala). Also edits incorrectly charged Ser-tRNA(Ala) and Gly-tRNA(Ala) via its editing domain. This chain is Alanine--tRNA ligase, found in Akkermansia muciniphila (strain ATCC BAA-835 / DSM 22959 / JCM 33894 / BCRC 81048 / CCUG 64013 / CIP 107961 / Muc).